The primary structure comprises 384 residues: Chaperone protein DnaJ (384 aa).

The region spanning 5-69 (DYYKVLGVDR…QKRAQYDQFG (65 aa)) is the J domain. Residues 141-223 (GKKTQVSYTR…CGGKGTVERK (83 aa)) form a CR-type zinc finger. 8 residues coordinate Zn(2+): Cys-154, Cys-157, Cys-171, Cys-174, Cys-197, Cys-200, Cys-211, and Cys-214. CXXCXGXG motif repeat units lie at residues 154–161 (CETCGGNG), 171–178 (CDKCHGTG), 197–204 (CDKCNGRG), and 211–218 (CKTCGGKG).

It belongs to the DnaJ family. In terms of assembly, homodimer. Requires Zn(2+) as cofactor.

It is found in the cytoplasm. Participates actively in the response to hyperosmotic and heat shock by preventing the aggregation of stress-denatured proteins and by disaggregating proteins, also in an autonomous, DnaK-independent fashion. Unfolded proteins bind initially to DnaJ; upon interaction with the DnaJ-bound protein, DnaK hydrolyzes its bound ATP, resulting in the formation of a stable complex. GrpE releases ADP from DnaK; ATP binding to DnaK triggers the release of the substrate protein, thus completing the reaction cycle. Several rounds of ATP-dependent interactions between DnaJ, DnaK and GrpE are required for fully efficient folding. Also involved, together with DnaK and GrpE, in the DNA replication of plasmids through activation of initiation proteins. The protein is Chaperone protein DnaJ of Lactobacillus acidophilus (strain ATCC 700396 / NCK56 / N2 / NCFM).